The primary structure comprises 500 residues: Phosphatidylserine decarboxylase proenzyme 1, mitochondrial (500 aa).

A mitochondrion; not cleaved when targeted to the endoplasmic reticulum-targeting transit peptide spans 1-48; that stretch reads MSIMPVKNALAQGRTLLMGRMPAVKFSTRMQLRNRTAVLWNRKFSTRL. Asparagine 34 is a glycosylation site (N-linked (GlcNAc...) asparagine). Residues 45–79 lie on the Mitochondrial matrix side of the membrane; that stretch reads STRLFVQQRRSSGEIVDRAKAAAANSGRKQVSMKW. The segment at 57–101 is enables targeting to the endoplasmic reticulum in addition to mitochondria; sequence GEIVDRAKAAAANSGRKQVSMKWVVLTSFTIVLGTILLVSRNDST. Residues 80–98 traverse the membrane as a helical segment; that stretch reads VVLTSFTIVLGTILLVSRN. At 99-500 the chain is on the mitochondrial intermembrane side; the sequence is DSTEEDATEG…LGIIGKNDLK (402 aa). Active-site charge relay system; for autoendoproteolytic cleavage activity residues include aspartate 210, histidine 348, and serine 463. The Schiff-base intermediate with substrate; via pyruvic acid; for decarboxylase activity role is filled by serine 463. Serine 463 carries the post-translational modification Pyruvic acid (Ser); by autocatalysis. Residues 475 to 492 form a required for processing and stability region; it reads FKFDVRVGDKVKMGQKLG.

The protein belongs to the phosphatidylserine decarboxylase family. PSD-B subfamily. Eukaryotic type I sub-subfamily. As to quaternary structure, heterodimer of a large membrane-associated beta subunit and a small pyruvoyl-containing alpha subunit. The cofactor is pyruvate. In terms of processing, glycosylated at Asn-34 in the endoplasmic reticulum. Post-translationally, the precursor is imported via the TOM complex into mitochondria, where the N-terminal presequence is cleaved by the matrix-located proteases MPP (MAS1-MAS2) and OCT1. Is synthesized initially as an inactive proenzyme. Formation of the active enzyme involves a self-maturation process in which the active site pyruvoyl group is generated from an internal serine residue via an autocatalytic post-translational modification. Two non-identical subunits are generated from the proenzyme in this reaction, and the pyruvate is formed at the N-terminus of the alpha chain, which is derived from the carboxyl end of the proenzyme. The autoendoproteolytic cleavage occurs by a canonical serine protease mechanism, in which the side chain hydroxyl group of the serine supplies its oxygen atom to form the C-terminus of the beta chain, while the remainder of the serine residue undergoes an oxidative deamination to produce ammonia and the pyruvoyl prosthetic group on the alpha chain. During this reaction, the Ser that is part of the protease active site of the proenzyme becomes the pyruvoyl prosthetic group, which constitutes an essential element of the active site of the mature decarboxylase.

The protein localises to the mitochondrion inner membrane. It localises to the lipid droplet. The protein resides in the endoplasmic reticulum membrane. The catalysed reaction is a 1,2-diacyl-sn-glycero-3-phospho-L-serine + H(+) = a 1,2-diacyl-sn-glycero-3-phosphoethanolamine + CO2. It participates in phospholipid metabolism; phosphatidylethanolamine biosynthesis; phosphatidylethanolamine from CDP-diacylglycerol: step 2/2. In terms of biological role, catalyzes the formation of phosphatidylethanolamine (PtdEtn) from phosphatidylserine (PtdSer). Plays a central role in phospholipid metabolism and in the interorganelle trafficking of phosphatidylserine. Phosphatidylethanolamine formed in the mitochondria is exported to other membranes to fullfill their requirements for PtdEtn. Required for normal mitochondrial morphology and proper mitochondrial fusion during yeast mating. Involved in lipid droplet biogenesis at the endoplasmic reticulum membrane. Required for induction of mitophagy during nitrogen starvation. Appears to play a specific role in supporting respiratory complex III activity. In Saccharomyces cerevisiae (strain ATCC 204508 / S288c) (Baker's yeast), this protein is Phosphatidylserine decarboxylase proenzyme 1, mitochondrial.